Consider the following 517-residue polypeptide: Maturase K (517 aa).

Belongs to the intron maturase 2 family. MatK subfamily.

Its subcellular location is the plastid. The protein resides in the chloroplast. Its function is as follows. Usually encoded in the trnK tRNA gene intron. Probably assists in splicing its own and other chloroplast group II introns. The sequence is that of Maturase K from Dracula chimaera.